We begin with the raw amino-acid sequence, 691 residues long: Serotransferrin-2 (691 aa).

The signal sequence occupies residues 1–18; that stretch reads MKLLLLSALLGCLATAYA. Transferrin-like domains follow at residues 25–329 and 340–670; these read VKWC…SLKK and IKWC…SLRK. Residues C28 and C50 are joined by a disulfide bond. Positions 74 and 104 each coordinate Fe(3+). 3 cysteine pairs are disulfide-bonded: C127–C207, C172–C186, and C235–C249. Hydrogencarbonate contacts are provided by T129, S134, G136, and W137. A glycan (N-linked (GlcNAc...) asparagine) is linked at N169. Y201 lines the Fe(3+) pocket. Fe(3+) is bound at residue H257. 2 disulfides stabilise this stretch: C343/C379 and C353/C370. Residues D394 and Y428 each contribute to the Fe(3+) site. 7 disulfide bridges follow: C404-C682, C419-C643, C451-C530, C475-C671, C485-C499, C496-C513, and C570-C584. Hydrogencarbonate-binding residues include T453, R457, A459, and G460. Y524 provides a ligand contact to Fe(3+). Residue H592 coordinates Fe(3+).

The protein belongs to the transferrin family. In terms of assembly, monomer. Abundant in liver and serum with smaller amounts found in the stomach and kidney.

It localises to the secreted. Transferrins are iron binding transport proteins which can bind two Fe(3+) ions in association with the binding of an anion, usually bicarbonate. It is responsible for the transport of iron from sites of absorption and heme degradation to those of storage and utilization. Serum transferrin may also have a further role in stimulating cell proliferation. The chain is Serotransferrin-2 (tf2) from Salmo salar (Atlantic salmon).